A 381-amino-acid chain; its full sequence is Prostatic acid phosphatase (381 aa).

A signal peptide spans Met1–Ala31. A substrate-binding site is contributed by Arg42. Residue His43 is the Nucleophile of the active site. Substrate is bound at residue Arg46. N-linked (GlcNAc...) asparagine glycosylation is present at Asn93. Arg110 contributes to the substrate binding site. Intrachain disulfides connect Cys160-Cys371, Cys214-Cys312, and Cys346-Cys350. Asn219 carries an N-linked (GlcNAc...) asparagine glycan. His288 is a substrate binding site. Catalysis depends on Asp289, which acts as the Proton donor. An N-linked (GlcNAc...) asparagine glycan is attached at Asn332.

Belongs to the histidine acid phosphatase family. In terms of assembly, homodimer; dimer formation is required for phosphatase activity. N-glycosylated. In terms of tissue distribution, expressed in prostate epithelium. Also expressed in the pelvic nerve and sacral spinal cord. Localizes in peptidergic and non-peptidergic nociceptive (pain-sensing) neurons.

Its subcellular location is the secreted. It is found in the cell membrane. The protein localises to the lysosome membrane. It carries out the reaction a phosphate monoester + H2O = an alcohol + phosphate. The enzyme catalyses a ribonucleoside 5'-phosphate + H2O = a ribonucleoside + phosphate. It catalyses the reaction 1-(9Z-octadecenoyl)-sn-glycero-3-phosphate + H2O = 1-(9Z-octadecenoyl)-sn-glycerol + phosphate. The catalysed reaction is O-phospho-L-tyrosyl-[protein] + H2O = L-tyrosyl-[protein] + phosphate. Its activity is regulated as follows. Inhibited by L(+)-tartrate. Its function is as follows. A non-specific tyrosine phosphatase that dephosphorylates a diverse number of substrates under acidic conditions (pH 4-6) including alkyl, aryl, and acyl orthophosphate monoesters and phosphorylated proteins. Has lipid phosphatase activity and inactivates lysophosphatidic acid in seminal plasma. In terms of biological role, in addition to its tyrosine phosphatase activity, also has ecto-5'-nucleotidase activity in dorsal root ganglion (DRG) neurons. Generates adenosine from AMP. This extracellular adenosine leads to a decrease in chronic pain by activating A1R in nociceptive neurons. The chain is Prostatic acid phosphatase (Acp3) from Rattus norvegicus (Rat).